A 727-amino-acid chain; its full sequence is Iron-sulfur clusters transporter atm1, mitochondrial (727 aa).

The segment at 46–97 is disordered; the sequence is NSPLRKDASKEPALASNSKTTNPIPTQASASVNPPKDARNATTAKKDLLSET. Residues 60 to 77 are compositionally biased toward polar residues; the sequence is ASNSKTTNPIPTQASASV. The span at 81 to 94 shows a compositional bias: basic and acidic residues; the sequence is KDARNATTAKKDLL. A helical membrane pass occupies residues 131-152; sequence VGTALSLLVGAKILNVEVPFYF. The 291-residue stretch at 131-421 folds into the ABC transmembrane type-1 domain; sequence VGTALSLLVG…LGSVYRELRQ (291 aa). The Mitochondrial intermembrane portion of the chain corresponds to 153–175; it reads KSIVDSMNIDFATVGGTAYTVAG. Residues 176–199 traverse the membrane as a helical segment; the sequence is SMIIAYGVTRIGATLFQELRNAVF. The Mitochondrial matrix portion of the chain corresponds to 200-248; that stretch reads ASVAQKAIRRVARNVFEHLLRLDLNFHLSRQTGGLTRAIDRGTKGISFL. Residues 249–272 traverse the membrane as a helical segment; the sequence is LTSMVFHVVPTALEISLVCGILTY. Position 273 (Q273) is a topological domain, mitochondrial intermembrane. The chain crosses the membrane as a helical span at residues 274–294; it reads YGFQFAAITAATMVAYTAFTI. Topologically, residues 295-360 are mitochondrial matrix; sequence TTTAWRTKFR…ASIKVTTSLA (66 aa). Glutathione contacts are provided by residues 300–304 and 363–366; these read RTKFR and NSGQ. Residues 361–379 traverse the membrane as a helical segment; it reads FLNSGQNMIFSSALAAMMY. Topologically, residues 380-394 are mitochondrial intermembrane; sequence LAANGVANGNLTVGD. A helical membrane pass occupies residues 395–416; sequence LVMVNQLVFQLSVPLNFLGSVY. G413 contacts glutathione. Topologically, residues 417-727 are mitochondrial matrix; the sequence is RELRQSLLDM…DMAPGPKAQQ (311 aa). An ABC transporter domain is found at 456–692; it reads IRFENVTFGY…NGIYAELWNA (237 aa). ATP is bound by residues Y465 and 489-500; that span reads GPSGCGKSTILR. The span at 702 to 719 shows a compositional bias: basic and acidic residues; the sequence is EFERETERDDVESKERDM. A disordered region spans residues 702–727; sequence EFERETERDDVESKERDMAPGPKAQQ.

Belongs to the ABC transporter superfamily. ABCB family. Heavy Metal importer (TC 3.A.1.210) subfamily. In terms of assembly, homodimer.

It localises to the mitochondrion inner membrane. In terms of biological role, performs an essential function in the generation of cytoplasmic iron-sulfur proteins by mediating the ATP-dependent export of Fe/S cluster precursors synthesized by nfs1 and other mitochondrial proteins. Hydrolyzes ATP. Binds glutathione and may function by transporting a glutathione-conjugated iron-sulfur compound. In Aspergillus fumigatus (strain ATCC MYA-4609 / CBS 101355 / FGSC A1100 / Af293) (Neosartorya fumigata), this protein is Iron-sulfur clusters transporter atm1, mitochondrial.